Here is a 503-residue protein sequence, read N- to C-terminus: V-type proton ATPase subunit B (503 aa).

Arg-378 is a binding site for ATP. Phosphoserine is present on residues Ser-491, Ser-492, Ser-502, and Ser-503.

Belongs to the ATPase alpha/beta chains family. As to quaternary structure, V-ATPase is a heteromultimeric enzyme composed of a peripheral catalytic V1 complex (components A to H) attached to an integral membrane V0 proton pore complex (components: a, c, c', c'', d, e, f and VOA1). Interacts with rav1.

Its subcellular location is the vacuole membrane. In terms of biological role, non-catalytic subunit of the V1 complex of vacuolar(H+)-ATPase (V-ATPase), a multisubunit enzyme composed of a peripheral complex (V1) that hydrolyzes ATP and a membrane integral complex (V0) that translocates protons. V-ATPase is responsible for acidifying and maintaining the pH of intracellular compartments. This chain is V-type proton ATPase subunit B, found in Schizosaccharomyces pombe (strain 972 / ATCC 24843) (Fission yeast).